The primary structure comprises 199 residues: Recombination protein RecR (199 aa).

The C4-type zinc-finger motif lies at 58 to 73 (CQRCFHLSSEDLCNIC). One can recognise a Toprim domain in the interval 81–175 (QTICVVADPR…RVTRIAFGLP (95 aa)).

It belongs to the RecR family.

Functionally, may play a role in DNA repair. It seems to be involved in an RecBC-independent recombinational process of DNA repair. It may act with RecF and RecO. This is Recombination protein RecR from Synechococcus elongatus (strain ATCC 33912 / PCC 7942 / FACHB-805) (Anacystis nidulans R2).